The sequence spans 1374 residues: DNA-directed RNA polymerase subunit beta' (1374 aa).

The segment at 1–47 is disordered; sequence MTSTSPKSRKPSTKTTKSKSKSKSKSKAAKAAAAGASPALARTPPQF. The segment covering 7–28 has biased composition (basic residues); that stretch reads KSRKPSTKTTKSKSKSKSKSKA. Residues 29–39 are compositionally biased toward low complexity; that stretch reads AKAAAAGASPA. The Zn(2+) site is built by cysteine 258, cysteine 325, cysteine 332, and cysteine 335. The tract at residues 1344–1374 is disordered; sequence RPTGENELEEEQLPDPSALEGLQQEGLLTEE. Residues 1362-1374 show a composition bias toward low complexity; sequence LEGLQQEGLLTEE.

This sequence belongs to the RNA polymerase beta' chain family. RpoC2 subfamily. In terms of assembly, in cyanobacteria the RNAP catalytic core is composed of 2 alpha, 1 beta, 1 beta', 1 gamma and 1 omega subunit. When a sigma factor is associated with the core the holoenzyme is formed, which can initiate transcription. Zn(2+) is required as a cofactor.

The catalysed reaction is RNA(n) + a ribonucleoside 5'-triphosphate = RNA(n+1) + diphosphate. In terms of biological role, DNA-dependent RNA polymerase catalyzes the transcription of DNA into RNA using the four ribonucleoside triphosphates as substrates. The polypeptide is DNA-directed RNA polymerase subunit beta' (Prochlorococcus marinus (strain MIT 9313)).